Reading from the N-terminus, the 757-residue chain is Protein transport protein SEC23-2 (757 aa).

Residues C56, C61, C80, and C83 each contribute to the Zn(2+) site.

This sequence belongs to the SEC23/SEC24 family. SEC23 subfamily. In terms of assembly, the COPII coat is composed of at least 5 proteins: the SEC23/24 complex, the SEC13/31 complex, and the protein SAR1.

The protein resides in the cytoplasm. The protein localises to the cytoplasmic vesicle. It localises to the COPII-coated vesicle membrane. Its subcellular location is the endoplasmic reticulum membrane. It is found in the golgi apparatus membrane. Component of the coat protein complex II (COPII) which promotes the formation of transport vesicles from the endoplasmic reticulum (ER). The coat has two main functions, the physical deformation of the endoplasmic reticulum membrane into vesicles and the selection of cargo molecules. This Candida glabrata (strain ATCC 2001 / BCRC 20586 / JCM 3761 / NBRC 0622 / NRRL Y-65 / CBS 138) (Yeast) protein is Protein transport protein SEC23-2 (SEC232).